The following is a 358-amino-acid chain: Peptide chain release factor 1 (358 aa).

An N5-methylglutamine modification is found at Gln237. Residues 291 to 309 (EESGYRKLAGHGDRSEKIR) show a composition bias toward basic and acidic residues. Residues 291–313 (EESGYRKLAGHGDRSEKIRTYNY) form a disordered region.

This sequence belongs to the prokaryotic/mitochondrial release factor family. In terms of processing, methylated by PrmC. Methylation increases the termination efficiency of RF1.

The protein resides in the cytoplasm. Peptide chain release factor 1 directs the termination of translation in response to the peptide chain termination codons UAG and UAA. This is Peptide chain release factor 1 from Mycoplasmopsis agalactiae (strain NCTC 10123 / CIP 59.7 / PG2) (Mycoplasma agalactiae).